A 342-amino-acid polypeptide reads, in one-letter code: N-acetyl-gamma-glutamyl-phosphate reductase (342 aa).

Cys-149 is an active-site residue.

The protein belongs to the NAGSA dehydrogenase family. Type 1 subfamily.

The protein resides in the cytoplasm. It carries out the reaction N-acetyl-L-glutamate 5-semialdehyde + phosphate + NADP(+) = N-acetyl-L-glutamyl 5-phosphate + NADPH + H(+). Its pathway is amino-acid biosynthesis; L-arginine biosynthesis; N(2)-acetyl-L-ornithine from L-glutamate: step 3/4. Catalyzes the NADPH-dependent reduction of N-acetyl-5-glutamyl phosphate to yield N-acetyl-L-glutamate 5-semialdehyde. The chain is N-acetyl-gamma-glutamyl-phosphate reductase from Cereibacter sphaeroides (strain ATCC 17023 / DSM 158 / JCM 6121 / CCUG 31486 / LMG 2827 / NBRC 12203 / NCIMB 8253 / ATH 2.4.1.) (Rhodobacter sphaeroides).